The primary structure comprises 412 residues: Orcinol synthase (412 aa).

Active-site residues include Cys164, His322, and Asn355.

The protein belongs to the thiolase-like superfamily. Chalcone/stilbene synthases family. In terms of assembly, homodimer. Mainly expressed in young leaves, and barely in mature leaves and twigs.

The catalysed reaction is 3 malonyl-CoA + acetyl-CoA + 3 H(+) = orcinol + 4 CO2 + 4 CoA. The enzyme catalyses 3 malonyl-CoA + acetyl-CoA + 2 H(+) = orsellinate + 3 CO2 + 4 CoA. It catalyses the reaction 3 malonyl-CoA + acetyl-CoA + 3 H(+) = tetraacetate lactone + 3 CO2 + 4 CoA. It carries out the reaction 2 malonyl-CoA + acetyl-CoA + 2 H(+) = triacetate lactone + 2 CO2 + 3 CoA. The catalysed reaction is 3 malonyl-CoA + acetyl-CoA + 3 H(+) = 2-acetylphloroglucinol + 3 CO2 + 4 CoA. Its pathway is secondary metabolite biosynthesis; terpenoid biosynthesis. Its function is as follows. Involved in the biosynthesis of acetate-derived aromatic tetraketides natural products, precursors of daurichromenic acid, an anti-human immunodeficiency viruses (HIV) meroterpenoid consisting of sesquiterpene and orsellinic acid (OSA) moieties. Accepts acetyl-CoA as starter substrate and produces orcinol as the major reaction product, along with four minor products including OSA, tetraacetate lactone, triacetate lactone and 2-acetylphloroglucinol. The protein is Orcinol synthase of Rhododendron dauricum (Azalea daurica).